We begin with the raw amino-acid sequence, 292 residues long: AhcY transcriptional activator HvrB (292 aa).

Residues Pro10–Thr67 enclose the HTH lysR-type domain. The segment at residues Phe27–Arg46 is a DNA-binding region (H-T-H motif).

This sequence belongs to the LysR transcriptional regulatory family.

In terms of biological role, functions as a low-light activator of ahcY expression (gene for S-adenosyl-L-homocysteine hydrolase) and as a high-light activator of an uncharacterized 21.6 kDa protein in the ahcY-hvrB intergenic region (orf5). It is also a negative regulator of its own expression. This chain is AhcY transcriptional activator HvrB (hvrB), found in Rhodobacter capsulatus (strain ATCC BAA-309 / NBRC 16581 / SB1003).